The chain runs to 336 residues: Ketol-acid reductoisomerase (NADP(+)) 1 (336 aa).

The KARI N-terminal Rossmann domain occupies 2 to 181 (AKVYYEKDVT…GATRAGVLET (180 aa)). NADP(+)-binding positions include 25–28 (YGSQ), Arg-48, Ser-52, and 82–85 (DELQ). His-107 is an active-site residue. Gly-133 is an NADP(+) binding site. In terms of domain architecture, KARI C-terminal knotted spans 182-327 (TFKEETETDL…RKLREMMPFV (146 aa)). Asp-190, Glu-194, Glu-226, and Glu-230 together coordinate Mg(2+). Ser-251 contributes to the substrate binding site.

The protein belongs to the ketol-acid reductoisomerase family. Requires Mg(2+) as cofactor.

It catalyses the reaction (2R)-2,3-dihydroxy-3-methylbutanoate + NADP(+) = (2S)-2-acetolactate + NADPH + H(+). The catalysed reaction is (2R,3R)-2,3-dihydroxy-3-methylpentanoate + NADP(+) = (S)-2-ethyl-2-hydroxy-3-oxobutanoate + NADPH + H(+). It functions in the pathway amino-acid biosynthesis; L-isoleucine biosynthesis; L-isoleucine from 2-oxobutanoate: step 2/4. Its pathway is amino-acid biosynthesis; L-valine biosynthesis; L-valine from pyruvate: step 2/4. Involved in the biosynthesis of branched-chain amino acids (BCAA). Catalyzes an alkyl-migration followed by a ketol-acid reduction of (S)-2-acetolactate (S2AL) to yield (R)-2,3-dihydroxy-isovalerate. In the isomerase reaction, S2AL is rearranged via a Mg-dependent methyl migration to produce 3-hydroxy-3-methyl-2-ketobutyrate (HMKB). In the reductase reaction, this 2-ketoacid undergoes a metal-dependent reduction by NADPH to yield (R)-2,3-dihydroxy-isovalerate. This Bacillus cereus (strain ZK / E33L) protein is Ketol-acid reductoisomerase (NADP(+)) 1.